Consider the following 647-residue polypeptide: MLPSGKRKADAFSCTSAARVTAKLALSFLALSTTPLVNAFSYEEPNAQIVLPIDASPIKPLLPEPPAPAEHKFTLRHIYHHGTYEHPTLHRKKDVPAQNADVWLAADDEYGQERIGTLKARSSPVRIQRLADRRPSVVDPMVAYARQQGYASVLSPEAWTMDEVAGPDITDKDTIISLALMAADAYVQTPDGADWEDVGAPFNRSLDFGWEGDGLRGHVFADETNSTIVIGLKGTSVAVFDGDGTTTNDKVNDNLFFSCCCAQQGPWTWHQVCDCATGTYSCNNTCVVQALRQENRYYQAGRELYANVTELYPDANVWIVGHSLGGAMSSLLGLTYGDPVVTFEAVPEALPAKRLGLPIPPGSDPDAPQTREYTGAFHIGHTADPVYVGTCNGATATCAIGGYAMESACHTGRECVYDTVGDLGWRVGIGTHKIRVVISDVLRKYEKVPECKFTPECRDCGNWKMYESNGTETTTTSSTPTSTSMTRTRTETCKTPGWWGCLDETTTTTGMATTTTSEMPTTSTTTCHTPGWFGCKDKTTTSTASTTTTPIATTATTTTTSSTTCLTPGKFWGCYDKTATTDIGSPSTSTELTITSAPALPSSVLTPSATATPPEGQPDDSGKRCRGRTWYGVCKDYEGGEGPVNDL.

The Cytoplasmic segment spans residues 1-18; that stretch reads MLPSGKRKADAFSCTSAA. The helical; Signal-anchor for type II membrane protein transmembrane segment at 19-39 threads the bilayer; it reads RVTAKLALSFLALSTTPLVNA. Residues 40–647 lie on the Lumenal side of the membrane; sequence FSYEEPNAQI…EGGEGPVNDL (608 aa). N-linked (GlcNAc...) asparagine glycans are attached at residues Asn203, Asn225, Asn283, and Asn307. Ser323 (charge relay system) is an active-site residue. An N-linked (GlcNAc...) asparagine glycan is attached at Asn469. The tract at residues 597-626 is disordered; sequence APALPSSVLTPSATATPPEGQPDDSGKRCR.

Belongs to the AB hydrolase superfamily. Lipase family. Binds to both phosphatidylinositol (PI) and phosphatidylinositol 3,5-bisphosphate (PIP2).

It is found in the endosome. The protein resides in the multivesicular body membrane. Its subcellular location is the prevacuolar compartment membrane. It carries out the reaction a triacylglycerol + H2O = a diacylglycerol + a fatty acid + H(+). In terms of biological role, lipase which is essential for lysis of subvacuolar cytoplasm to vacuole targeted bodies and intravacuolar autophagic bodies. Involved in the lysis of intravacuolar multivesicular body (MVB) vesicles. The intravacuolar membrane disintegration by atg15 is critical to life span extension. The polypeptide is Putative lipase atg15 (atg15) (Neurospora crassa (strain ATCC 24698 / 74-OR23-1A / CBS 708.71 / DSM 1257 / FGSC 987)).